We begin with the raw amino-acid sequence, 341 residues long: Serpentine receptor class alpha-28 (341 aa).

A run of 7 helical transmembrane segments spans residues 25–45, 57–77, 107–129, 142–162, 188–208, 242–262, and 275–295; these read FIISIIIISFFTTTKSVRVLL, LLFSAIINGIIHQCVTAVIRL, YYYTNLFSSFCCFSLFLDRLFSF, ASIVLILSQIVLPIGPLYWVF, VNNIRICVLIVLLFFAIFLYI, IVIFSQILCVGPTSSITSVFI, and LIISYLTGLTYSNFLLPLIIL.

It belongs to the nematode receptor-like protein sra family.

It localises to the membrane. The polypeptide is Serpentine receptor class alpha-28 (sra-28) (Caenorhabditis elegans).